A 534-amino-acid polypeptide reads, in one-letter code: Glucans biosynthesis protein D (534 aa).

The segment at residues 1–30 is a signal peptide (tat-type signal); that stretch reads MRMQRRHLLKNAAAALAALGLPALPQWALA.

The protein belongs to the OpgD/OpgG family. Predicted to be exported by the Tat system. The position of the signal peptide cleavage has not been experimentally proven.

Its subcellular location is the periplasm. It functions in the pathway glycan metabolism; osmoregulated periplasmic glucan (OPG) biosynthesis. Its function is as follows. Probably involved in the control of the structural glucose backbone of osmoregulated periplasmic glucans (OPGs). The protein is Glucans biosynthesis protein D of Xanthomonas oryzae pv. oryzae (strain PXO99A).